The primary structure comprises 636 residues: 1-deoxy-D-xylulose-5-phosphate synthase (636 aa).

Thiamine diphosphate-binding positions include His72 and 113–115; that span reads GHA. Asp144 lines the Mg(2+) pocket. Residues 145–146, Asn174, Tyr287, and Glu370 contribute to the thiamine diphosphate site; that span reads GS. Mg(2+) is bound at residue Asn174.

The protein belongs to the transketolase family. DXPS subfamily. In terms of assembly, homodimer. Requires Mg(2+) as cofactor. Thiamine diphosphate serves as cofactor.

The catalysed reaction is D-glyceraldehyde 3-phosphate + pyruvate + H(+) = 1-deoxy-D-xylulose 5-phosphate + CO2. It participates in metabolic intermediate biosynthesis; 1-deoxy-D-xylulose 5-phosphate biosynthesis; 1-deoxy-D-xylulose 5-phosphate from D-glyceraldehyde 3-phosphate and pyruvate: step 1/1. Catalyzes the acyloin condensation reaction between C atoms 2 and 3 of pyruvate and glyceraldehyde 3-phosphate to yield 1-deoxy-D-xylulose-5-phosphate (DXP). The polypeptide is 1-deoxy-D-xylulose-5-phosphate synthase (Synechococcus elongatus (strain ATCC 33912 / PCC 7942 / FACHB-805) (Anacystis nidulans R2)).